Here is a 502-residue protein sequence, read N- to C-terminus: NAD(P)H-quinone oxidoreductase chain 4, chloroplastic (502 aa).

14 consecutive transmembrane segments (helical) span residues 4 to 24 (FPWLTIIVGLPIFAGTLIFFF), 37 to 57 (ICICILELLITAYVFCYHFQL), 87 to 107 (VGPILLTGFITTLATLAAWPV), 113 to 130 (LFHFLMLAMYSGQIGLFS), 134 to 154 (LLLFFIMWEFELIPVYLLLSM), 167 to 187 (FILYTAGGSIFLLMGVLGMGL), 208 to 228 (ALEILFYFGFLIGYAVKLPII), 242 to 262 (HYSTCMLLAGILLKMGAYGLV), 272 to 292 (AHSIFSPWLIIVGAIQIIYAA), 305 to 325 (IAYSSVSHMGFIIIGICSITD), 330 to 350 (GAILQMISHGFIGAALFFLAG), 374 to 396 (IFTMFSSFSMASLALPGMSGFAA), 416 to 436 (ILITFVTAIGMILTPIYSLSM), and 464 to 484 (LFVSICIFLPVIGIGIYPDFV).

This sequence belongs to the complex I subunit 4 family.

Its subcellular location is the plastid. It is found in the chloroplast thylakoid membrane. The catalysed reaction is a plastoquinone + NADH + (n+1) H(+)(in) = a plastoquinol + NAD(+) + n H(+)(out). It catalyses the reaction a plastoquinone + NADPH + (n+1) H(+)(in) = a plastoquinol + NADP(+) + n H(+)(out). This Ranunculus macranthus (Large buttercup) protein is NAD(P)H-quinone oxidoreductase chain 4, chloroplastic.